The following is a 151-amino-acid chain: MKIWVDADACPVVIKEILFKAADRTKIAITLVANHHVRIPPSPFISFMQVSSGFDVADDEIVKRIEANDLVITSDIPLADEVIDKSGIALSPRGELYTKENIKSRLNIRDFMDTMRASGVHTGGPPALNQTDRQNFANHLDRIITQFKKTQ.

This sequence belongs to the UPF0178 family.

The sequence is that of UPF0178 protein CPS_3584 from Colwellia psychrerythraea (strain 34H / ATCC BAA-681) (Vibrio psychroerythus).